The following is a 306-amino-acid chain: Glutaminase (306 aa).

The substrate site is built by Ser64, Asn115, Glu159, Asn166, Tyr190, Tyr242, and Val260.

The protein belongs to the glutaminase family. As to quaternary structure, homotetramer.

The enzyme catalyses L-glutamine + H2O = L-glutamate + NH4(+). The polypeptide is Glutaminase (Aliivibrio fischeri (strain ATCC 700601 / ES114) (Vibrio fischeri)).